We begin with the raw amino-acid sequence, 358 residues long: Cytoplasmic dynein 2 light intermediate chain 1 (358 aa).

2 disordered regions span residues 1–35 (MPKV…EDAH) and 307–358 (ESTR…ALDP). Residues 24–33 (TDEEEAEEED) show a composition bias toward acidic residues. Basic and acidic residues-rich tracts occupy residues 307-320 (ESTR…DPVK) and 333-349 (RAQK…EQAK).

It belongs to the dynein light intermediate chain family. Light intermediate chain of the cytoplasmic dynein complex 2, a multisubunit complex composed at least of eleven different proteins. The cytoplasmic dynein 2 complex consists of two catalytic heavy chains (HCs) and a number of non-catalytic subunits presented by intermediate chains (ICs), light intermediate chains (LICs) and light chains (LCs). Among them, a heavy chain (DYNC2H1), two intermediate chains (DYNC2I2 and DYNC2I1), a light intermediate chain (DYNC2LI1), and a light chain (DYNLT2B) are unique to the dynein-2 complex, but a subset of light chains are also shared by dynein-1 and dynein-2 complexes. Dynein-2 complex is built around two copies of cytoplasmic dynein 2 heavy chain 1 (DYNC2H1). The C-terminal region forms the motor domain, which converts the energy from ATP hydrolysis into movement. Its N-terminal region forms the tail, an extended structure that binds the other subunits and holds the two heavy chains in a homodimer.

The protein resides in the cytoplasm. The protein localises to the cell projection. Its subcellular location is the cilium. It localises to the cytoskeleton. It is found in the cilium basal body. The protein resides in the cilium axoneme. The protein localises to the microtubule organizing center. Its subcellular location is the centrosome. Its function is as follows. Acts as one of several non-catalytic accessory components of the cytoplasmic dynein 2 complex (dynein-2 complex), a motor protein complex that drives the movement of cargos along microtubules within cilia and flagella in concert with the intraflagellar transport (IFT) system, facilitating the assembly of these organelles. The polypeptide is Cytoplasmic dynein 2 light intermediate chain 1 (dync2li1) (Danio rerio (Zebrafish)).